Reading from the N-terminus, the 283-residue chain is Release factor glutamine methyltransferase (283 aa).

S-adenosyl-L-methionine is bound by residues 120-124 (GTGSG), aspartate 143, phenylalanine 172, and asparagine 187. A substrate-binding site is contributed by 187–190 (NPPY).

This sequence belongs to the protein N5-glutamine methyltransferase family. PrmC subfamily.

The catalysed reaction is L-glutaminyl-[peptide chain release factor] + S-adenosyl-L-methionine = N(5)-methyl-L-glutaminyl-[peptide chain release factor] + S-adenosyl-L-homocysteine + H(+). Methylates the class 1 translation termination release factors RF1/PrfA and RF2/PrfB on the glutamine residue of the universally conserved GGQ motif. The protein is Release factor glutamine methyltransferase of Moorella thermoacetica (strain ATCC 39073 / JCM 9320).